The sequence spans 1481 residues: MQRSPLEKASVVSKLFFSWTRPILKKGYRQRLELSDIYHISSSDSADNLSEKLEREWDRELASKKNPKLINALRRCFFWRFMFYGIILYLGEVTKAVQPLLLGRIIASYDPDNKVERSIAIYLGIGLCLLFIVRTLLLHPAIFGLHHIGMQMRIAMFSLIYKKTLKLSSRVLDKISIGQLVSLLSNNLNKFDEGLALAHFVWIAPLQVTLLMGLLWELLQAFTFCGLAFLIVLALLQAGLGKMMMKYRDQRAGKINERLVITSEMIENIQSVKAYCWEEAMEKIIENLRQTELKLTRKAAYVRYLNSSAFFFSGFFVVFLSVLPYALLKGIILRKIFTTISFCIVLRMAVTRQFPWAVQTWYDSLGAINKIQDFLQKQEYKTLEYNLTTTDVVMENVTAFWEEGFSKLFEKAKENNNSRKISNGDNSLFFSNLLLGTPVLKDISFKIERGQLLAVAGSTGAGKTSLLMMIMGELEPSEGKIKHSGRISFCSQYSWIMPGTIKDNIIFGVSYDEYRYRSVIKACQLEEDISKFAEKDNVVLGEGGITLSGGQRARISLARAVYKDADLYLLDSPFGYLDVLTEKEIFESCICKLMANKTRILVTSKMEHLKKADKILILHEGSIYFYGTFSELQNQRPDFSSKLMGCDTFDQFTAERRNSIITETLRRFSLEGDTSVSWNETKKPSFKQTGEFGEKRKNSILSSINSIRKFSVVQKTSLQMNGIEGAADAPLERRLSLVPHSEPGEGILPRSNAVNSGPTFLGGRRQSVLNLMTGSSVNQGQSIHRKTATSTRKMSLAPQASLAEIDIYSRRLSQDTGLEISEEINEEDLRDCFFDDVENIPAVTTWNTYLRYITVHKSLMFVLIWCLVVFLVEVAASLVVLCLFPKIFFQDKGNSTKSANNSYAVIITSTSSYYIFYIYVGVADTLLALGLFRGLPLVHTLITVSKTLHHKMLQSVLQAPMSTLNTLKTGGILNRFSKDIAVLDDLLPLTIFDFVQLLLIVIGAVVVVSVLQPYIFLATVPVIAAFILLRAYFLHTSQQLKQLESEGRSPIFTHLVTSLKGLWTLRAFGRQPYFETLFHKALNLHTANWFLYLSTLRWFQMRIEMIFVIFFIAVTFISILTTGEGEGRVGIILTLAMNIMGTLQWAVNSSIDVDSLMRSVSRVFKFIDMPTEDGKPNNSFRPSKDSQPSKVMIIENQHVKKDDIWPSGGQMTVKDLTAKYTDGGNAILENISFSISPGQRVGLLGRTGSGKSTLLLAFLRLLNTKGEIQIDGVSWDSITLQQWRKAFGVIPQKVFIFSGTFRKNLDPYGQWSDQEIWKVADEVGLRSVIEQFPGKLDFVLVDGGCVLSHGHKQLMCLARSVLSKAKILLLDEPSAHLDPITYQIIRRTLKQAFANCTVILSEHRIEAMLECQRFLVIEENKVRQYDSIQRMLSEKSLFRQAISPADRLKLLPHRNSSRQRSRSNIAALKEETEEEVQETKL.

The Cytoplasmic portion of the chain corresponds to 1-77; that stretch reads MQRSPLEKAS…KLINALRRCF (77 aa). The chain crosses the membrane as a helical span at residues 78–98; that stretch reads FWRFMFYGIILYLGEVTKAVQ. An ABC transmembrane type-1 1 domain is found at 81 to 365; that stretch reads FMFYGIILYL…WAVQTWYDSL (285 aa). Residues 99-122 are Extracellular-facing; sequence PLLLGRIIASYDPDNKVERSIAIY. Residues 123–146 traverse the membrane as a helical segment; that stretch reads LGIGLCLLFIVRTLLLHPAIFGLH. Over 147-195 the chain is Cytoplasmic; the sequence is HIGMQMRIAMFSLIYKKTLKLSSRVLDKISIGQLVSLLSNNLNKFDEGL. A helical transmembrane segment spans residues 196-216; that stretch reads ALAHFVWIAPLQVTLLMGLLW. Residues 217–222 lie on the Extracellular side of the membrane; sequence ELLQAF. A helical membrane pass occupies residues 223–243; the sequence is TFCGLAFLIVLALLQAGLGKM. Residues 244–298 are Cytoplasmic-facing; that stretch reads MMKYRDQRAGKINERLVITSEMIENIQSVKAYCWEEAMEKIIENLRQTELKLTRK. The chain crosses the membrane as a helical span at residues 299-319; sequence AAYVRYLNSSAFFFSGFFVVF. Residues 320–339 are Extracellular-facing; it reads LSVLPYALLKGIILRKIFTT. Residues 340 to 358 traverse the membrane as a helical segment; it reads ISFCIVLRMAVTRQFPWAV. The Cytoplasmic segment spans residues 359-858; sequence QTWYDSLGAI…YLRYITVHKS (500 aa). Residues Trp-401, 457–464, and Gln-492 each bind ATP; that span reads GSTGAGKT. In terms of domain architecture, ABC transporter 1 spans 423–645; that stretch reads NGDNSLFFSN…RPDFSSKLMG (223 aa). Cys-523 carries S-palmitoyl cysteine lipidation. Ser-548 is subject to Phosphoserine. Positions 653–831 are disordered R region; it reads TAERRNSIIT…EEINEEDLRD (179 aa). Phosphoserine; by PKA is present on residues Ser-659 and Ser-669. Ser-685 is subject to Phosphoserine; by PKC. A Glycyl lysine isopeptide (Lys-Gly) (interchain with G-Cter in ubiquitin) cross-link involves residue Lys-687. At Ser-699 the chain carries Phosphoserine; by PKA. Ser-711 carries the post-translational modification Phosphoserine. Phosphothreonine is present on Thr-716. Residues Ser-736 and Ser-767 each carry the phosphoserine; by PKA modification. Phosphoserine; by PKC is present on Ser-790. Ser-795 and Ser-813 each carry phosphoserine; by PKA. The helical transmembrane segment at 859–879 threads the bilayer; it reads LMFVLIWCLVVFLVEVAASLV. One can recognise an ABC transmembrane type-1 2 domain in the interval 859–1155; the sequence is LMFVLIWCLV…AVNSSIDVDS (297 aa). The Extracellular portion of the chain corresponds to 880 to 918; the sequence is VLCLFPKIFFQDKGNSTKSANNSYAVIITSTSSYYIFYI. N-linked (GlcNAc...) asparagine glycans are attached at residues Asn-894 and Asn-900. The chain crosses the membrane as a discontinuously helical span at residues 919 to 939; sequence YVGVADTLLALGLFRGLPLVH. At 940 to 990 the chain is on the cytoplasmic side; it reads TLITVSKTLHHKMLQSVLQAPMSTLNTLKTGGILNRFSKDIAVLDDLLPLT. A helical transmembrane segment spans residues 991-1011; the sequence is IFDFVQLLLIVIGAVVVVSVL. Residues 1012 to 1013 lie on the Extracellular side of the membrane; sequence QP. A helical membrane pass occupies residues 1014-1034; it reads YIFLATVPVIAAFILLRAYFL. Over 1035 to 1095 the chain is Cytoplasmic; that stretch reads HTSQQLKQLE…TANWFLYLST (61 aa). A helical membrane pass occupies residues 1096–1116; that stretch reads LRWFQMRIEMIFVIFFIAVTF. Residues 1117 to 1130 are Extracellular-facing; the sequence is ISILTTGEGEGRVG. Residues 1131 to 1151 traverse the membrane as a helical segment; it reads IILTLAMNIMGTLQWAVNSSI. Residues 1152–1481 are Cytoplasmic-facing; sequence DVDSLMRSVS…TEEEVQETKL (330 aa). The ABC transporter 2 domain maps to 1211 to 1444; it reads MTVKDLTAKY…KSLFRQAISP (234 aa). Residues Tyr-1220 and 1245–1252 each bind ATP; that span reads GRTGSGKS. Positions 1387–1481 are interaction with GORASP2; sequence RTLKQAFANC…TEEEVQETKL (95 aa). Cys-1396 is lipidated: S-palmitoyl cysteine. The disordered stretch occupies residues 1453-1481; sequence HRNSSRQRSRSNIAALKEETEEEVQETKL. Phosphoserine is present on Ser-1457. The segment covering 1471 to 1481 has biased composition (acidic residues); the sequence is ETEEEVQETKL. Residues 1479–1481 carry the PDZ-binding motif; the sequence is TKL.

Belongs to the ABC transporter superfamily. ABCC family. CFTR transporter (TC 3.A.1.202) subfamily. As to quaternary structure, monomer; does not require oligomerization for channel activity. May form oligomers in the membrane. Interacts with SLC26A3, SLC26A6 and NHERF1. Interacts with SHANK2. Interacts with MYO6. Interacts (via C-terminus) with GOPC (via PDZ domain); this promotes CFTR internalization and thereby decreases channel activity. Interacts with SLC4A7 through NHERF1. Found in a complex with MYO5B and RAB11A. Interacts with ANO1. Interacts with SLC26A8. Interacts with AHCYL1; the interaction increases CFTR activity. Interacts with CSE1L. The core-glycosylated form interacts with GORASP2 (via PDZ GRASP-type 1 domain) in respone to ER stress. Interacts with MARCHF2; the interaction leads to CFTR ubiqtuitination and degradation. Interacts with ADGRG2. In terms of processing, N-glycosylated. Phosphorylated; cAMP treatment promotes phosphorylation and activates the channel. Dephosphorylation decreases the ATPase activity (in vitro). Phosphorylation at PKA sites activates the channel. Phosphorylation at PKC sites enhances the response to phosphorylation by PKA. Phosphorylated by AMPK; this inhibits channel activity. Post-translationally, ubiquitinated, leading to its degradation in the lysosome. Deubiquitination by USP10 in early endosomes enhances its endocytic recycling to the cell membrane. Ubiquitinated by RNF185 during ER stress. Ubiquitinated by MARCHF2.

The protein resides in the apical cell membrane. The protein localises to the early endosome membrane. It localises to the cell membrane. Its subcellular location is the recycling endosome membrane. It is found in the endoplasmic reticulum membrane. The protein resides in the nucleus. It catalyses the reaction ATP + H2O + closed Cl(-) channel = ADP + phosphate + open Cl(-) channel.. The catalysed reaction is chloride(in) = chloride(out). It carries out the reaction hydrogencarbonate(in) = hydrogencarbonate(out). The enzyme catalyses ATP + H2O = ADP + phosphate + H(+). In terms of biological role, epithelial ion channel that plays an important role in the regulation of epithelial ion and water transport and fluid homeostasis. Mediates the transport of chloride ions across the cell membrane. Possesses an intrinsic ATPase activity and utilizes ATP to gate its channel; the passive flow of anions through the channel is gated by cycles of ATP binding and hydrolysis by the ATP-binding domains. The ion channel is also permeable to HCO(3)(-); selectivity depends on the extracellular chloride concentration. Exerts its function also by modulating the activity of other ion channels and transporters. Contributes to the regulation of the pH and the ion content of the epithelial fluid layer. Modulates the activity of the epithelial sodium channel (ENaC) complex, in part by regulating the cell surface expression of the ENaC complex. May regulate bicarbonate secretion and salvage in epithelial cells by regulating the transporter SLC4A7. Can inhibit the chloride channel activity of ANO1. Plays a role in the chloride and bicarbonate homeostasis during sperm epididymal maturation and capacitation. The polypeptide is Cystic fibrosis transmembrane conductance regulator (Bos taurus (Bovine)).